Reading from the N-terminus, the 324-residue chain is Glutathione synthetase (324 aa).

An ATP-grasp domain is found at 125–312 (EKLFTTTHFP…ISTIILDNLE (188 aa)). Residue 152–209 (FIKTYKDIIIKPLHGMAGLSIFRIKEHDPNTSVIIETMTKYETIPCISQNYITDIQKG) coordinates ATP. Glu283 and Asn285 together coordinate Mg(2+).

The protein belongs to the prokaryotic GSH synthase family. Mg(2+) is required as a cofactor. It depends on Mn(2+) as a cofactor.

It catalyses the reaction gamma-L-glutamyl-L-cysteine + glycine + ATP = glutathione + ADP + phosphate + H(+). The protein operates within sulfur metabolism; glutathione biosynthesis; glutathione from L-cysteine and L-glutamate: step 2/2. The protein is Glutathione synthetase of Buchnera aphidicola subsp. Baizongia pistaciae (strain Bp).